The chain runs to 1240 residues: Serine/threonine-protein kinase TAO2 (1240 aa).

Phosphoserine is present on serine 9. In terms of domain architecture, Protein kinase spans 28 to 281 (FSDLREIGHG…SEVLLKHRFV (254 aa)). Residues 34-42 (IGHGSFGAV) and lysine 57 contribute to the ATP site. The Proton acceptor role is filled by aspartate 151. Serine 181 bears the Phosphoserine mark. The segment at 320–463 (APNGPGAEAP…PTSTSSSARR (144 aa)) is disordered. Positions 356–380 (SSHSVPSMSISASSQSSSVNSLADA) are enriched in low complexity. Residues 381–401 (SDNEEEEEEEEEEEEEEEEEG) are compositionally biased toward acidic residues. A compositionally biased stretch (basic and acidic residues) spans 402 to 417 (PESREMAMMQEGEHTV). Serine 422 is subject to Phosphoserine. Coiled coils occupy residues 493-528 (SALR…EEHS) and 581-608 (KELA…LQEN). At serine 663 the chain carries Phosphoserine. Residues 688–720 (LRQHEATRELELRQLQAVQRTRAELTRLQHQTE) are a coiled coil. 3 positions are modified to phosphoserine: serine 782, serine 830, and serine 832. Positions 805–934 (RILGKEGTTL…GDGCPSPDIP (130 aa)) form a coiled coil. The tract at residues 899–946 (VLTPVPEEEEEEEEEGGAPIGTHRDPGDGCPSPDIPPEPPPSHLRQYP) is disordered. Over residues 904–914 (PEEEEEEEEEG) the composition is skewed to acidic residues. The segment covering 931–940 (PDIPPEPPPS) has biased composition (pro residues). 5 helical membrane passes run 972–992 (LLPL…GGGL), 994–1014 (AALL…LFLC), 1019–1039 (LPPG…VLSL), 1045–1065 (LMGV…SLAL), and 1175–1195 (LASC…LLKG). Leucine 999 bears the Omega-N-methylarginine mark. Leucine 1037 bears the Phosphoserine mark. Residues 1212 to 1240 (LGLSASRQLPPGTVAGRRSQTRRTLPPWR) are disordered.

This sequence belongs to the protein kinase superfamily. STE Ser/Thr protein kinase family. STE20 subfamily. Interacts with MAP2K3 and MAP2K6. Self-associates. Interacts with tubulins. Interacts with MAP3K7 and interferes with MAP3K7-binding to CHUK and thus prevents NF-kappa-B activation. Isoform 2 interacts with PCDH8; this complex may also include CDH2. Requires Mg(2+) as cofactor. In terms of processing, autophosphorylated. Phosphorylated by ATM. Post-translationally, phosphorylated on Ser-1037 by MAPK14. This phosphorylation is required PCDH8 for endocytosis.

It is found in the cytoplasmic vesicle membrane. The protein resides in the cytoplasm. The protein localises to the cytoskeleton. It localises to the cell projection. Its subcellular location is the dendrite. The enzyme catalyses L-seryl-[protein] + ATP = O-phospho-L-seryl-[protein] + ADP + H(+). It catalyses the reaction L-threonyl-[protein] + ATP = O-phospho-L-threonyl-[protein] + ADP + H(+). Serine/threonine-protein kinase involved in different processes such as membrane blebbing and apoptotic bodies formation DNA damage response and MAPK14/p38 MAPK stress-activated MAPK cascade. Phosphorylates itself, MBP, activated MAPK8, MAP2K3, MAP2K6 and tubulins. Activates the MAPK14/p38 MAPK signaling pathway through the specific activation and phosphorylation of the upstream MAP2K3 and MAP2K6 kinases. In response to DNA damage, involved in the G2/M transition DNA damage checkpoint by activating the p38/MAPK14 stress-activated MAPK cascade, probably by mediating phosphorylation of upstream MAP2K3 and MAP2K6 kinases. May affect microtubule organization and stability. May play a role in the osmotic stress-MAPK8 pathway. Prevents MAP3K7-mediated activation of CHUK, and thus NF-kappa-B activation. Isoform 2, but not isoform 1, is required for PCDH8 endocytosis. Following homophilic interactions between PCDH8 extracellular domains, isoform 2 phosphorylates and activates MAPK14/p38 MAPK which in turn phosphorylates isoform 2. This process leads to PCDH8 endocytosis and CDH2 cointernalization. Both isoforms are involved in MAPK14/p38 MAPK activation. The sequence is that of Serine/threonine-protein kinase TAO2 (Taok2) from Mus musculus (Mouse).